Here is a 947-residue protein sequence, read N- to C-terminus: MSQPPIGGAAPATAAASPAAAATEARLHPEGSSRKQQRAQSPARPRDSSLRQTIAATRSPVGAGTKLNSVRQQQLQQQQQQGNKTGSRTGPPASIRGGGGGAEKATPLAPKGAAPGAVQPVAGAEAAPAATLAALGGRRPGPPEEPPRELESVPSKLGEPPPLGEGGGGGGEGGGAGGGSGEREGGAPQPPPPRGWRGKGVRAQQRGGSGGEGASPSPSSSSAGKTPGTGSRNSGSGVAGGGSGGGGSYWKEGCLQSELIQFHLKKERAAAAAAAAQMHAKNGGGSSSRSSPVSGPPAVCETLAVASASPMAAAAEGPQQSAEGSASGGGMQAAAPPSSQPHPQQLQEQEEMQEEMEKLREENETLKNEIDELRTEMDEMRDTFFEEDACQLQEMRHELERANKNCRILQYRLRKAERKRLRYAQTGEIDGELLRSLEQDLKVAKDVSVRLHHELENVEEKRTTTEDENEKLRQQLIEVEIAKQALQNELEKMKELSLKRRGSKDLPKSEKKAQQTPTEEDNEDLKCQLQFVKEEAALMRKKMAKIDKEKDRFEHELQKYRSFYGDLDSPLPKGEAGGPPSTREAELKLRLRLVEEEANILGRKIVELEVENRGLKAELDDLRGDDFNGSANPLMREQSESLSELRQHLQLVEDETELLRRNVADLEEQNKRITAELNKYKYKSGGHDSARHHDNAKTEALQEELKAARLQINELSGKVMQLQYENRVLMSNMQRYDLASHLGIRGSPRDSDAESDAGKKESDDDSRPPHRKREGPIGGESDSEEVRNIRCLTPTRSFYPAPGPWPKSFSDRQQMKDIRSEAERLGKTIDRLIADTSTIITEARIYVANGDLFGLMDEEDDGSRIREHELLYRINAQMKAFRKELQTFIDRLEVPKSADDRGAEEPISVSQMFQPIILLILILVLFSSLSYTTIFKLVFLFTLFFVL.

The first 21 residues, 1–21 (MSQPPIGGAAPATAAASPAAA), serve as a signal peptide directing secretion. Disordered regions lie at residues 1-251 (MSQP…SYWK), 266-368 (KERA…TLKN), and 496-524 (LSLKRRGSKDLPKSEKKAQQTPTEEDNED). Composition is skewed to low complexity over residues 9-24 (AAPATAAASPAAAATE), 72-81 (QQQLQQQQQQ), and 109-137 (APKGAAPGAVQPVAGAEAAPAATLAALGG). Residues 141-151 (GPPEEPPRELE) show a composition bias toward basic and acidic residues. The segment covering 164-180 (GEGGGGGGEGGGAGGGS) has biased composition (gly residues). Residues 214 to 236 (ASPSPSSSSAGKTPGTGSRNSGS) are compositionally biased toward low complexity. Positions 237–248 (GVAGGGSGGGGS) are enriched in gly residues. Composition is skewed to low complexity over residues 287–297 (SSRSSPVSGPP) and 304–325 (AVASASPMAAAAEGPQQSAEGS). A coiled-coil region spans residues 342–726 (HPQQLQEQEE…GKVMQLQYEN (385 aa)). Composition is skewed to basic and acidic residues over residues 355–368 (EMEKLREENETLKN) and 496–513 (LSLKRRGSKDLPKSEKKA). S569 is subject to Phosphoserine. The tract at residues 743-786 (GIRGSPRDSDAESDAGKKESDDDSRPPHRKREGPIGGESDSEEV) is disordered. Residues 747–768 (SPRDSDAESDAGKKESDDDSRP) are compositionally biased toward basic and acidic residues. S781 is modified (phosphoserine). Residues 811–835 (DRQQMKDIRSEAERLGKTIDRLIAD) are a coiled coil. Residues 915-935 (PIILLILILVLFSSLSYTTIF) traverse the membrane as a helical segment.

Belongs to the MTCL family.

The protein resides in the membrane. The polypeptide is Microtubule cross-linking factor 3 (Homo sapiens (Human)).